A 197-amino-acid chain; its full sequence is Holliday junction branch migration complex subunit RuvA (197 aa).

The domain I stretch occupies residues 1 to 64 (MIGRLSGKLI…EDAHLLYGFA (64 aa)). The domain II stretch occupies residues 65-143 (SKEERQTFRQ…TGGNLTVPGG (79 aa)). Residues 143–147 (GLPFA) are flexible linker. The tract at residues 148–197 (ATPDEKSDIVNALLALGYNEKEAAAATKSLPADVTVSEGVRLALKSLMKV) is domain III.

The protein belongs to the RuvA family. Homotetramer. Forms an RuvA(8)-RuvB(12)-Holliday junction (HJ) complex. HJ DNA is sandwiched between 2 RuvA tetramers; dsDNA enters through RuvA and exits via RuvB. An RuvB hexamer assembles on each DNA strand where it exits the tetramer. Each RuvB hexamer is contacted by two RuvA subunits (via domain III) on 2 adjacent RuvB subunits; this complex drives branch migration. In the full resolvosome a probable DNA-RuvA(4)-RuvB(12)-RuvC(2) complex forms which resolves the HJ.

The protein resides in the cytoplasm. In terms of biological role, the RuvA-RuvB-RuvC complex processes Holliday junction (HJ) DNA during genetic recombination and DNA repair, while the RuvA-RuvB complex plays an important role in the rescue of blocked DNA replication forks via replication fork reversal (RFR). RuvA specifically binds to HJ cruciform DNA, conferring on it an open structure. The RuvB hexamer acts as an ATP-dependent pump, pulling dsDNA into and through the RuvAB complex. HJ branch migration allows RuvC to scan DNA until it finds its consensus sequence, where it cleaves and resolves the cruciform DNA. The sequence is that of Holliday junction branch migration complex subunit RuvA from Chromobacterium violaceum (strain ATCC 12472 / DSM 30191 / JCM 1249 / CCUG 213 / NBRC 12614 / NCIMB 9131 / NCTC 9757 / MK).